Consider the following 195-residue polypeptide: ATP-dependent Clp protease proteolytic subunit (195 aa).

The active-site Nucleophile is the Ser98. The active site involves His123.

The protein belongs to the peptidase S14 family. In terms of assembly, fourteen ClpP subunits assemble into 2 heptameric rings which stack back to back to give a disk-like structure with a central cavity, resembling the structure of eukaryotic proteasomes.

The protein localises to the cytoplasm. The catalysed reaction is Hydrolysis of proteins to small peptides in the presence of ATP and magnesium. alpha-casein is the usual test substrate. In the absence of ATP, only oligopeptides shorter than five residues are hydrolyzed (such as succinyl-Leu-Tyr-|-NHMec, and Leu-Tyr-Leu-|-Tyr-Trp, in which cleavage of the -Tyr-|-Leu- and -Tyr-|-Trp bonds also occurs).. Functionally, cleaves peptides in various proteins in a process that requires ATP hydrolysis. Has a chymotrypsin-like activity. Plays a major role in the degradation of misfolded proteins. The sequence is that of ATP-dependent Clp protease proteolytic subunit from Alkaliphilus oremlandii (strain OhILAs) (Clostridium oremlandii (strain OhILAs)).